Consider the following 226-residue polypeptide: Thiopurine S-methyltransferase (226 aa).

Residues Trp16, Met51, Glu72, and Arg131 each contribute to the S-adenosyl-L-methionine site.

This sequence belongs to the class I-like SAM-binding methyltransferase superfamily. TPMT family.

The protein localises to the cytoplasm. The catalysed reaction is S-adenosyl-L-methionine + a thiopurine = S-adenosyl-L-homocysteine + a thiopurine S-methylether.. The polypeptide is Thiopurine S-methyltransferase (Francisella tularensis subsp. tularensis (strain SCHU S4 / Schu 4)).